We begin with the raw amino-acid sequence, 920 residues long: Phosphoenolpyruvate carboxylase (920 aa).

Active-site residues include histidine 138 and lysine 583.

Belongs to the PEPCase type 1 family. The cofactor is Mg(2+).

It carries out the reaction oxaloacetate + phosphate = phosphoenolpyruvate + hydrogencarbonate. Functionally, forms oxaloacetate, a four-carbon dicarboxylic acid source for the tricarboxylic acid cycle. The polypeptide is Phosphoenolpyruvate carboxylase (Streptococcus pyogenes serotype M1).